The primary structure comprises 278 residues: Digeranylgeranylglyceryl phosphate synthase (278 aa).

Helical transmembrane passes span L12–F32, I34–G54, L91–V111, V142–C162, F204–I224, Y226–M246, and S257–F277.

This sequence belongs to the UbiA prenyltransferase family. DGGGP synthase subfamily. Mg(2+) is required as a cofactor.

It localises to the cell membrane. The catalysed reaction is sn-3-O-(geranylgeranyl)glycerol 1-phosphate + (2E,6E,10E)-geranylgeranyl diphosphate = 2,3-bis-O-(geranylgeranyl)-sn-glycerol 1-phosphate + diphosphate. It participates in membrane lipid metabolism; glycerophospholipid metabolism. In terms of biological role, prenyltransferase that catalyzes the transfer of the geranylgeranyl moiety of geranylgeranyl diphosphate (GGPP) to the C2 hydroxyl of (S)-3-O-geranylgeranylglyceryl phosphate (GGGP). This reaction is the second ether-bond-formation step in the biosynthesis of archaeal membrane lipids. In Methanococcus maripaludis (strain C6 / ATCC BAA-1332), this protein is Digeranylgeranylglyceryl phosphate synthase.